The following is an 81-amino-acid chain: Antimicrobial peptide Con22 (81 aa).

The first 22 residues, 1 to 22 (MNAKVMLVCLLVTMLVMEPAEA), serve as a signal peptide directing secretion. A propeptide spanning residues 66-81 (EAGQIPFDEFMNVLYS) is cleaved from the precursor.

The protein belongs to the non-disulfide-bridged peptide (NDBP) superfamily. Long chain multifunctional peptide (group 2) family. Expressed by the venom gland.

Its subcellular location is the secreted. The protein resides in the target cell membrane. At high concentrations, acts as a pore former in cellular membranes and causes the leakage of the cells. At submicromolar concentrations, degranulates granulocytes and has a weak hemolytic activity against human erythrocytes. Also strongly inhibits the production of superoxide anions. Has a strong antibacterial activity against Gram-negative bacteria but is less active against Gram-positive bacteria. Also has antifungal activity. The polypeptide is Antimicrobial peptide Con22 (Urodacus yaschenkoi (Inland robust scorpion)).